A 454-amino-acid chain; its full sequence is uncharacterized protein (454 aa).

One can recognise an HNH domain in the interval 364–405; that stretch reads CSRPGCDAPAYHSEVHHVTPWTTTHRTDINDLTLACGPDNRL.

It belongs to the Rv1128c/1148c/1588c/1702c/1945/3466 family.

This is an uncharacterized protein from Mycobacterium tuberculosis (strain ATCC 25618 / H37Rv).